The chain runs to 159 residues: 3-hydroxyacyl-[acyl-carrier-protein] dehydratase FabZ (159 aa).

Residue H62 is part of the active site.

The protein belongs to the thioester dehydratase family. FabZ subfamily.

The protein localises to the cytoplasm. It catalyses the reaction a (3R)-hydroxyacyl-[ACP] = a (2E)-enoyl-[ACP] + H2O. Functionally, involved in unsaturated fatty acids biosynthesis. Catalyzes the dehydration of short chain beta-hydroxyacyl-ACPs and long chain saturated and unsaturated beta-hydroxyacyl-ACPs. The chain is 3-hydroxyacyl-[acyl-carrier-protein] dehydratase FabZ from Methylobacterium nodulans (strain LMG 21967 / CNCM I-2342 / ORS 2060).